A 503-amino-acid chain; its full sequence is Probable cytochrome P450 303a1 (503 aa).

Cys448 lines the heme pocket.

The protein belongs to the cytochrome P450 family. The cofactor is heme.

It is found in the endoplasmic reticulum membrane. Its subcellular location is the microsome membrane. Its function is as follows. May be involved in the metabolism of insect hormones and in the breakdown of synthetic insecticides. This chain is Probable cytochrome P450 303a1 (Cyp303a1), found in Drosophila melanogaster (Fruit fly).